The chain runs to 226 residues: ATP-dependent dethiobiotin synthetase BioD (226 aa).

14–19 (GIGKTF) is an ATP binding site. Residue T18 participates in Mg(2+) binding. Residue K39 is part of the active site. S43 contributes to the substrate binding site. ATP is bound by residues D56, 117-120 (EGVG), 177-178 (NT), 206-208 (PHI), and N213. Mg(2+) contacts are provided by D56 and E117.

Belongs to the dethiobiotin synthetase family. Homodimer. It depends on Mg(2+) as a cofactor.

It localises to the cytoplasm. It carries out the reaction (7R,8S)-7,8-diammoniononanoate + CO2 + ATP = (4R,5S)-dethiobiotin + ADP + phosphate + 3 H(+). It participates in cofactor biosynthesis; biotin biosynthesis; biotin from 7,8-diaminononanoate: step 1/2. Its function is as follows. Catalyzes a mechanistically unusual reaction, the ATP-dependent insertion of CO2 between the N7 and N8 nitrogen atoms of 7,8-diaminopelargonic acid (DAPA, also called 7,8-diammoniononanoate) to form a ureido ring. The protein is ATP-dependent dethiobiotin synthetase BioD of Xylella fastidiosa (strain Temecula1 / ATCC 700964).